The chain runs to 179 residues: MADLITVARPYAEALMGWRKRAARNRPGRMHCRRLPAMIADVQAQAFLTDPERRDAEKVSLLSAVPVAVDVKAWKAFLALLIHNDRWPATAEIGTLFADAMRRAEGVVDVLVTSAIALDAGQKTAVQSALERRFAGHKVRFREAVDAALIGGLVIHTGDLTIDASVRGQVQQLARTLRS.

Belongs to the ATPase delta chain family. In terms of assembly, F-type ATPases have 2 components, F(1) - the catalytic core - and F(0) - the membrane proton channel. F(1) has five subunits: alpha(3), beta(3), gamma(1), delta(1), epsilon(1). F(0) has three main subunits: a(1), b(2) and c(10-14). The alpha and beta chains form an alternating ring which encloses part of the gamma chain. F(1) is attached to F(0) by a central stalk formed by the gamma and epsilon chains, while a peripheral stalk is formed by the delta and b chains.

The protein resides in the cell inner membrane. Its function is as follows. F(1)F(0) ATP synthase produces ATP from ADP in the presence of a proton or sodium gradient. F-type ATPases consist of two structural domains, F(1) containing the extramembraneous catalytic core and F(0) containing the membrane proton channel, linked together by a central stalk and a peripheral stalk. During catalysis, ATP synthesis in the catalytic domain of F(1) is coupled via a rotary mechanism of the central stalk subunits to proton translocation. This protein is part of the stalk that links CF(0) to CF(1). It either transmits conformational changes from CF(0) to CF(1) or is implicated in proton conduction. In Acidithiobacillus ferridurans, this protein is ATP synthase subunit delta.